The sequence spans 57 residues: MLKVTLVKSLIGRKKDHIATAHALGLRKIGKTVEHEGTPQIKGMINKISYLLKVEEA.

This sequence belongs to the universal ribosomal protein uL30 family. As to quaternary structure, part of the 50S ribosomal subunit.

This Clostridium perfringens (strain ATCC 13124 / DSM 756 / JCM 1290 / NCIMB 6125 / NCTC 8237 / Type A) protein is Large ribosomal subunit protein uL30.